The chain runs to 160 residues: Large ribosomal subunit protein uL11 (160 aa).

This sequence belongs to the universal ribosomal protein uL11 family. As to quaternary structure, part of the ribosomal stalk of the 50S ribosomal subunit. Interacts with L10 and the large rRNA to form the base of the stalk. L10 forms an elongated spine to which L12 dimers bind in a sequential fashion forming a multimeric L10(L12)X complex.

Its function is as follows. Forms part of the ribosomal stalk which helps the ribosome interact with GTP-bound translation factors. In Nanoarchaeum equitans (strain Kin4-M), this protein is Large ribosomal subunit protein uL11.